A 234-amino-acid polypeptide reads, in one-letter code: Proteasome subunit alpha type-2 (234 aa).

The protein belongs to the peptidase T1A family. As to quaternary structure, the 26S proteasome consists of a 20S proteasome core and two 19S regulatory subunits. The 20S proteasome core is composed of 28 subunits that are arranged in four stacked rings, resulting in a barrel-shaped structure. The two end rings are each formed by seven alpha subunits, and the two central rings are each formed by seven beta subunits. The catalytic chamber with the active sites is on the inside of the barrel. Interacts with Rpn6.

The protein localises to the cytoplasm. Its subcellular location is the nucleus. The proteasome is a multicatalytic proteinase complex which is characterized by its ability to cleave peptides with Arg, Phe, Tyr, Leu, and Glu adjacent to the leaving group at neutral or slightly basic pH. The proteasome has an ATP-dependent proteolytic activity. The chain is Proteasome subunit alpha type-2 (Prosalpha2) from Drosophila melanogaster (Fruit fly).